A 276-amino-acid chain; its full sequence is MALVKTKPTSPGRRSMVKVVNKDLHKGAPHAPLLEKQFQKSGRNNNGHITTRHKGGGHKHHYRVVDFKRNDKDGIPARVERLEYDPNRSANIALVLFADGERRYIIATKGMVAGQPLMNGSEAPIKAGNNLPIRNIPVGTTINNVEMLPGKGSQIARAAGGSAVLLAREGLYAQVRLRSGEVRRVHIECRATIGEVGNEEHSLRVIGKAGATRWRGIRPTVRGVVMNPVDHPHGGGEGKTAAGRDPVSPWGTPAKGYRTRSNKRTDSMIVQKRHKR.

Disordered stretches follow at residues 38-59 (FQKS…GGHK) and 225-276 (VMNP…RHKR). Positions 39-49 (QKSGRNNNGHI) are enriched in polar residues. The span at 50–59 (TTRHKGGGHK) shows a compositional bias: basic residues.

This sequence belongs to the universal ribosomal protein uL2 family. As to quaternary structure, part of the 50S ribosomal subunit. Forms a bridge to the 30S subunit in the 70S ribosome.

In terms of biological role, one of the primary rRNA binding proteins. Required for association of the 30S and 50S subunits to form the 70S ribosome, for tRNA binding and peptide bond formation. It has been suggested to have peptidyltransferase activity; this is somewhat controversial. Makes several contacts with the 16S rRNA in the 70S ribosome. The sequence is that of Large ribosomal subunit protein uL2 from Cupriavidus necator (strain ATCC 17699 / DSM 428 / KCTC 22496 / NCIMB 10442 / H16 / Stanier 337) (Ralstonia eutropha).